A 43-amino-acid polypeptide reads, in one-letter code: Protein PsbN (43 aa).

A helical membrane pass occupies residues 4-24; the sequence is AIVLSISMAAVVVAITGISIY.

Belongs to the PsbN family.

It is found in the cellular thylakoid membrane. May play a role in photosystem I and II biogenesis. The sequence is that of Protein PsbN from Nostoc punctiforme (strain ATCC 29133 / PCC 73102).